A 147-amino-acid polypeptide reads, in one-letter code: Hemoglobin subunit beta-1 (147 aa).

The region spanning 3 to 147 (EWTDKERSII…VVSALGKQYH (145 aa)) is the Globin domain. Residues H64 and H93 each coordinate heme b.

Belongs to the globin family. Heterotetramer of two alpha chains and two beta chains. In terms of tissue distribution, red blood cells.

Involved in oxygen transport from gills to the various peripheral tissues. In Pagothenia borchgrevinki (Bald rockcod), this protein is Hemoglobin subunit beta-1 (hbb1).